Consider the following 1098-residue polypeptide: Ran-binding protein 16 (1098 aa).

It belongs to the exportin family. As to quaternary structure, binds to nucleoporins and the GTP-bound form of Ran.

The protein localises to the cytoplasm. It is found in the nucleus. Functionally, may function as a nuclear transport receptor. In Drosophila melanogaster (Fruit fly), this protein is Ran-binding protein 16 (Ranbp16).